A 192-amino-acid chain; its full sequence is Pyridoxal 5'-phosphate synthase subunit PdxT (192 aa).

50-52 contacts L-glutamine; that stretch reads GES. Cysteine 82 acts as the Nucleophile in catalysis. L-glutamine is bound by residues arginine 109 and 136 to 137; that span reads IR. Residues histidine 172 and glutamate 174 each act as charge relay system in the active site.

Belongs to the glutaminase PdxT/SNO family. In terms of assembly, in the presence of PdxS, forms a dodecamer of heterodimers. Only shows activity in the heterodimer.

It carries out the reaction aldehydo-D-ribose 5-phosphate + D-glyceraldehyde 3-phosphate + L-glutamine = pyridoxal 5'-phosphate + L-glutamate + phosphate + 3 H2O + H(+). The catalysed reaction is L-glutamine + H2O = L-glutamate + NH4(+). It functions in the pathway cofactor biosynthesis; pyridoxal 5'-phosphate biosynthesis. Its function is as follows. Catalyzes the hydrolysis of glutamine to glutamate and ammonia as part of the biosynthesis of pyridoxal 5'-phosphate. The resulting ammonia molecule is channeled to the active site of PdxS. The chain is Pyridoxal 5'-phosphate synthase subunit PdxT from Haemophilus influenzae (strain PittGG).